A 397-amino-acid polypeptide reads, in one-letter code: Yellow-related salivary protein LJM111 (397 aa).

The signal sequence occupies residues 1 to 18; sequence MKLFFFLYTFGLVQTIFG.

Belongs to the major royal jelly protein family. As to expression, salivary gland (at protein level).

The protein resides in the secreted. Probably modulates blood feeding of sand flies on vertebrate species by binding and sequestering different mediators involved in the host response. Binds biogenic amines. Binds adrenaline and noradrenaline with high affinity. Binds serotonin. Binds dopamine and octopamine. Exhibits anti-inflammatory effects in the host: reduces IL17A, TNF-alpha (TNF) and IFN-gamma (IFNG) production by host lymph node cells, suppresses expression of MHC-II and CD86, reduces TNF-alpha production and increases IL10 production, in host bone marrow-derived dendritic cells (BMDCs) stimulated by lipopolysaccharides. Reduces pain in mouse mechanical hypernociception model. The chain is Yellow-related salivary protein LJM111 from Lutzomyia longipalpis (Sand fly).